Consider the following 305-residue polypeptide: Olfactory receptor 9G19 (305 aa).

Residues 1-24 (MDQNNNTVSEFIMLGFTTDPVIQK) are Extracellular-facing. The chain crosses the membrane as a helical span at residues 25–45 (VLFAVFLVVYTLTLMGNSSLI). The Cytoplasmic portion of the chain corresponds to 46–55 (MLICNDSRLH). Residues 56 to 76 (TPMYFFIGNLSFLDLGLSSVY) form a helical membrane-spanning segment. Residues 77 to 96 (TPKILETCISEDKSISFAGC) lie on the Extracellular side of the membrane. Residues C96 and C178 are joined by a disulfide bond. The helical transmembrane segment at 97-117 (VAQFFFSAALDYTECYLLAAM) threads the bilayer. Residues 118-138 (AYDRYVAISKPLLYSQAMSLK) lie on the Cytoplasmic side of the membrane. A helical membrane pass occupies residues 139–159 (LCVCFVVASYVGGFINSVIIT). Residues 160 to 204 (KDTFALTFCNDNVIDDFFCDIPPLVKLACGKKKSFQSVLFFLLTS) are Extracellular-facing. Residues 205-225 (NVIIPIVFILATYLFIIATIL) traverse the membrane as a helical segment. The Cytoplasmic segment spans residues 226 to 236 (RIRSTQGRLKA). The chain crosses the membrane as a helical span at residues 237–257 (FSTCSSHLISVTLYYGSILYI). At 258–270 (YARPRSSYSLDRD) the chain is on the extracellular side. The chain crosses the membrane as a helical span at residues 271–291 (KIVSTFYTVVFPMLNPLIYSL). The Cytoplasmic segment spans residues 292-305 (RNKDVKEALNKLLK).

The protein belongs to the G-protein coupled receptor 1 family.

It localises to the cell membrane. Odorant receptor. This Mus musculus (Mouse) protein is Olfactory receptor 9G19.